Consider the following 399-residue polypeptide: P2X purinoceptor 1 (399 aa).

Residues 1–28 (MARRLQDELSAFFFEYDTPRMVLVRNKK) lie on the Cytoplasmic side of the membrane. A helical transmembrane segment spans residues 29 to 50 (VGVIFRLIQLVVLVYVIGWVFV). Topologically, residues 51–338 (YEKGYQTSSG…IPTMTTIGSG (288 aa)) are extracellular. CTP-binding residues include K68, K70, and K140. K70 contacts ATP. Cystine bridges form between C117/C165, C126/C149, and C132/C159. N153 and N184 each carry an N-linked (GlcNAc...) asparagine glycan. Residue T186 participates in CTP binding. T186 is a binding site for ATP. N-linked (GlcNAc...) asparagine glycosylation occurs at N210. 2 disulfide bridges follow: C217-C227 and C261-C270. S286, N290, and R292 together coordinate ATP. 2 residues coordinate CTP: N290 and R292. N300 is a glycosylation site (N-linked (GlcNAc...) asparagine). K309 is a CTP binding site. An ATP-binding site is contributed by K309. Residues 331–338 (TMTTIGSG) are pore-forming motif. A helical membrane pass occupies residues 339–358 (IGIFGVATVLCDLLLLHILP). At 359–399 (KRHYYKQKKFKYAEDMGPGEGERDPAATSSTLGLQENMRTS) the chain is on the cytoplasmic side. Positions 374–399 (MGPGEGERDPAATSSTLGLQENMRTS) are disordered. Residues 385–399 (ATSSTLGLQENMRTS) show a composition bias toward polar residues. A phosphoserine mark is found at S387 and S388. T389 carries the phosphothreonine modification.

The protein belongs to the P2X receptor family. In terms of assembly, functional P2XRs are organized as homomeric and heteromeric trimers. Forms heterodimer with P2RX2. Forms heterodimer with P2RX4. Forms heterodimer with P2RX5. Expressed in smooth muscle of the bladder and arteries.

It is found in the cell membrane. The enzyme catalyses Ca(2+)(in) = Ca(2+)(out). It carries out the reaction K(+)(in) = K(+)(out). It catalyses the reaction Na(+)(in) = Na(+)(out). Its activity is regulated as follows. Activated by low concentrations of ATP (&lt;1 uM). Undergoes rapid desensitisation. Sensitives to the ATP agonist:alpha/beta-methylene-ATP. Modulated by cholesterol. Its function is as follows. ATP-gated nonselective transmembrane cation channel permeable to potassium, sodium and with relatively high calcium permeability. Furthermore, CTP functions as a weak affinity agonist for P2RX1. Plays a role in male fertility, bladder contraction and platelet aggregation. Specifically, plays an important role in neurogenic contraction of smooth muscle of the vas deferens, and therefore is essential for normal male reproductive function. In addition, contributes to smooth muscle contractions of the urinary bladder. On platelets, contributes to platelet activation and aggregation and thereby, also to thrombosis. On neutrophils, it is involved in chemotaxis and in mitigating the activation of circulating cells. The protein is P2X purinoceptor 1 (P2rx1) of Mus musculus (Mouse).